The chain runs to 105 residues: Met repressor (105 aa).

The protein belongs to the MetJ family. Homodimer.

The protein resides in the cytoplasm. This regulatory protein, when combined with SAM (S-adenosylmethionine) represses the expression of the methionine regulon and of enzymes involved in SAM synthesis. The chain is Met repressor from Erwinia tasmaniensis (strain DSM 17950 / CFBP 7177 / CIP 109463 / NCPPB 4357 / Et1/99).